Here is a 215-residue protein sequence, read N- to C-terminus: Myelin protein zero-like protein 2 (215 aa).

The signal sequence occupies residues 1-26; that stretch reads MYGKSSTRAVLLLLGIQLTALWPIAA. Residues 27–141 form the Ig-like V-type domain; sequence VEIYTSRVLE…DGVIGEIRLS (115 aa). At 27-154 the chain is on the extracellular side; it reads VEIYTSRVLE…TVRFSEIHFL (128 aa). 2 N-linked (GlcNAc...) asparagine glycosylation sites follow: asparagine 39 and asparagine 118. Cysteine 47 and cysteine 123 form a disulfide bridge. A helical membrane pass occupies residues 155–175; the sequence is ALAIGSACALMIIIVIVVVLF. At 176-215 the chain is on the cytoplasmic side; it reads QHYRKKRWAERAHKVVEIKSKEEERLNQEKKVSVYLEDTD.

The protein belongs to the myelin P0 protein family. In terms of tissue distribution, widely expressed. In fetal tissues, highest expression in the inner ear. In adult tissues, highest levels in thymus and lung.

Its subcellular location is the membrane. Mediates homophilic cell-cell adhesion. The protein is Myelin protein zero-like protein 2 (MPZL2) of Homo sapiens (Human).